The primary structure comprises 235 residues: Protein FEV (235 aa).

The ETS DNA-binding region spans 58-138 (IQLWQFLLEL…HGKRYAYKFD (81 aa)).

Belongs to the ETS family. As to expression, expressed by serotonergic neurons in anterior and posterior raphe.

It is found in the nucleus. Its function is as follows. Functions as a transcriptional regulator. Functions in the differentiation and the maintenance of the central serotonergic neurons. May play a role in cell growth. This Danio rerio (Zebrafish) protein is Protein FEV (fev).